Reading from the N-terminus, the 786-residue chain is Spermatogenesis-associated protein 20 (786 aa).

Residues 1 to 22 (MLGARAWLGRVLLLPRAGAGLA) form the signal peptide. Positions 23-61 (ASRRGSSSRDKDRSATVSSSVPMPAGGKGSHPSSTPQRV) are disordered. At Ser-649 the chain carries Phosphoserine.

It is found in the secreted. Its function is as follows. May play a role in fertility regulation. The chain is Spermatogenesis-associated protein 20 (SPATA20) from Homo sapiens (Human).